Reading from the N-terminus, the 28-residue chain is Aryl acylamidase (28 aa).

Homodimer.

It carries out the reaction an anilide + H2O = aniline + a carboxylate + H(+). The protein is Aryl acylamidase of Nocardia globerula.